Consider the following 208-residue polypeptide: Thymidylate kinase (208 aa).

9 to 16 (GGEGCGKS) is an ATP binding site.

It belongs to the thymidylate kinase family.

It carries out the reaction dTMP + ATP = dTDP + ADP. Its function is as follows. Phosphorylation of dTMP to form dTDP in both de novo and salvage pathways of dTTP synthesis. In Dehalococcoides mccartyi (strain ATCC BAA-2100 / JCM 16839 / KCTC 5957 / BAV1), this protein is Thymidylate kinase.